The chain runs to 635 residues: Threonine--tRNA ligase (635 aa).

The region spanning 1-61 (MVSIRLPDGS…DRDASLAIVT (61 aa)) is the TGS domain. The segment at 242–533 (DHRKLGKQLD…LIEHHAGAMP (292 aa)) is catalytic. Residues Cys333, His384, and His510 each contribute to the Zn(2+) site.

It belongs to the class-II aminoacyl-tRNA synthetase family. In terms of assembly, homodimer. Zn(2+) is required as a cofactor.

The protein resides in the cytoplasm. The catalysed reaction is tRNA(Thr) + L-threonine + ATP = L-threonyl-tRNA(Thr) + AMP + diphosphate + H(+). In terms of biological role, catalyzes the attachment of threonine to tRNA(Thr) in a two-step reaction: L-threonine is first activated by ATP to form Thr-AMP and then transferred to the acceptor end of tRNA(Thr). Also edits incorrectly charged L-seryl-tRNA(Thr). The protein is Threonine--tRNA ligase of Burkholderia cenocepacia (strain ATCC BAA-245 / DSM 16553 / LMG 16656 / NCTC 13227 / J2315 / CF5610) (Burkholderia cepacia (strain J2315)).